Consider the following 199-residue polypeptide: Pyridoxal 5'-phosphate synthase subunit PdxT (199 aa).

51–53 (GES) provides a ligand contact to L-glutamine. Residue Cys83 is the Nucleophile of the active site. Residues Arg110 and 137–138 (IR) each bind L-glutamine. Catalysis depends on charge relay system residues His172 and Glu174.

The protein belongs to the glutaminase PdxT/SNO family. In the presence of PdxS, forms a dodecamer of heterodimers. Only shows activity in the heterodimer.

The enzyme catalyses aldehydo-D-ribose 5-phosphate + D-glyceraldehyde 3-phosphate + L-glutamine = pyridoxal 5'-phosphate + L-glutamate + phosphate + 3 H2O + H(+). The catalysed reaction is L-glutamine + H2O = L-glutamate + NH4(+). It participates in cofactor biosynthesis; pyridoxal 5'-phosphate biosynthesis. Functionally, catalyzes the hydrolysis of glutamine to glutamate and ammonia as part of the biosynthesis of pyridoxal 5'-phosphate. The resulting ammonia molecule is channeled to the active site of PdxS. The protein is Pyridoxal 5'-phosphate synthase subunit PdxT of Thermoplasma volcanium (strain ATCC 51530 / DSM 4299 / JCM 9571 / NBRC 15438 / GSS1).